A 154-amino-acid chain; its full sequence is Prefoldin subunit 2 (154 aa).

Residues Ile-124–Ser-139 are compositionally biased toward basic and acidic residues. The interval Ile-124–Ser-154 is disordered. Low complexity predominate over residues Glu-140–Ser-154.

It belongs to the prefoldin subunit beta family. As to quaternary structure, heterohexamer of two PFD-alpha type and four PFD-beta type subunits. Component of the PAQosome complex which is responsible for the biogenesis of several protein complexes and which consists of R2TP complex members RUVBL1, RUVBL2, RPAP3 and PIH1D1, URI complex members PFDN2, PFDN6, PDRG1, UXT and URI1 as well as ASDURF, POLR2E and DNAAF10/WDR92. Interacts with URI1; the interaction is phosphorylation-dependent and occurs in a growth-dependent manner.

It localises to the nucleus. The protein localises to the cytoplasm. Its subcellular location is the mitochondrion. Functionally, binds specifically to cytosolic chaperonin (c-CPN) and transfers target proteins to it. Binds to nascent polypeptide chain and promotes folding in an environment in which there are many competing pathways for nonnative proteins. The protein is Prefoldin subunit 2 (PFDN2) of Homo sapiens (Human).